Here is a 782-residue protein sequence, read N- to C-terminus: E3 ubiquitin-protein ligase SopA (782 aa).

A disordered region spans residues 137–171; the sequence is VSVSANNRPTVSEGRTPPVSPSLSLQATSSPSSPA. The span at 157–171 shows a compositional bias: low complexity; it reads PSLSLQATSSPSSPA. Cys753 acts as the Glycyl thioester intermediate in catalysis.

Belongs to the SopA E3 ligase family. Ubiquitinated in the presence of host E1 ubiquitin-activating enzyme, E2 ubiquitin-conjugating enzyme and ubiquitin.

The protein localises to the secreted. It is found in the host cell. It carries out the reaction S-ubiquitinyl-[E2 ubiquitin-conjugating enzyme]-L-cysteine + [acceptor protein]-L-lysine = [E2 ubiquitin-conjugating enzyme]-L-cysteine + N(6)-ubiquitinyl-[acceptor protein]-L-lysine.. Its function is as follows. Effector proteins function to alter host cell physiology and promote bacterial survival in host tissues. This protein is an E3 ubiquitin ligase that interferes with host's ubiquitination pathway. The polypeptide is E3 ubiquitin-protein ligase SopA (sopA) (Salmonella heidelberg (strain SL476)).